A 267-amino-acid chain; its full sequence is Proteasome subunit alpha (267 aa).

A disordered region spans residues 231-267 (ETLLQERDSKESAESEEPKESEEGKKTGKKSDADSSD). Residues 234–267 (LQERDSKESAESEEPKESEEGKKTGKKSDADSSD) show a composition bias toward basic and acidic residues.

This sequence belongs to the peptidase T1A family. In terms of assembly, the 20S proteasome core is composed of 14 alpha and 14 beta subunits that assemble into four stacked heptameric rings, resulting in a barrel-shaped structure. The two inner rings, each composed of seven catalytic beta subunits, are sandwiched by two outer rings, each composed of seven alpha subunits. The catalytic chamber with the active sites is on the inside of the barrel. Has a gated structure, the ends of the cylinder being occluded by the N-termini of the alpha-subunits. Is capped by the proteasome-associated ATPase, ARC.

It is found in the cytoplasm. The protein operates within protein degradation; proteasomal Pup-dependent pathway. The formation of the proteasomal ATPase ARC-20S proteasome complex, likely via the docking of the C-termini of ARC into the intersubunit pockets in the alpha-rings, may trigger opening of the gate for substrate entry. Interconversion between the open-gate and close-gate conformations leads to a dynamic regulation of the 20S proteasome proteolysis activity. In terms of biological role, component of the proteasome core, a large protease complex with broad specificity involved in protein degradation. This Mycobacterium marinum (strain ATCC BAA-535 / M) protein is Proteasome subunit alpha.